The following is a 79-amino-acid chain: D-alanyl carrier protein (79 aa).

One can recognise a Carrier domain in the interval 1 to 77 (MDVKAEVIEI…KIVEGVTELR (77 aa)). Ser35 is subject to O-(pantetheine 4'-phosphoryl)serine.

Belongs to the DltC family. Post-translationally, 4'-phosphopantetheine is transferred from CoA to a specific serine of apo-DCP.

It localises to the cytoplasm. The protein operates within cell wall biogenesis; lipoteichoic acid biosynthesis. Functionally, carrier protein involved in the D-alanylation of lipoteichoic acid (LTA). The loading of thioester-linked D-alanine onto DltC is catalyzed by D-alanine--D-alanyl carrier protein ligase DltA. The DltC-carried D-alanyl group is further transferred to cell membrane phosphatidylglycerol (PG) by forming an ester bond, probably catalyzed by DltD. D-alanylation of LTA plays an important role in modulating the properties of the cell wall in Gram-positive bacteria, influencing the net charge of the cell wall. The sequence is that of D-alanyl carrier protein from Streptococcus thermophilus (strain CNRZ 1066).